Here is a 431-residue protein sequence, read N- to C-terminus: Histidine--tRNA ligase (431 aa).

The protein belongs to the class-II aminoacyl-tRNA synthetase family. As to quaternary structure, homodimer.

The protein localises to the cytoplasm. It carries out the reaction tRNA(His) + L-histidine + ATP = L-histidyl-tRNA(His) + AMP + diphosphate + H(+). The polypeptide is Histidine--tRNA ligase (hisS) (Leifsonia xyli subsp. xyli (strain CTCB07)).